A 227-amino-acid chain; its full sequence is 2,3-bisphosphoglycerate-dependent phosphoglycerate mutase (227 aa).

Residues R7–N14, T20–G21, R59, E86–Y89, K97, R113–R114, and G182–N183 each bind substrate. The active-site Tele-phosphohistidine intermediate is H8. The active-site Proton donor/acceptor is the E86.

This sequence belongs to the phosphoglycerate mutase family. BPG-dependent PGAM subfamily. In terms of assembly, homodimer.

It catalyses the reaction (2R)-2-phosphoglycerate = (2R)-3-phosphoglycerate. Its pathway is carbohydrate degradation; glycolysis; pyruvate from D-glyceraldehyde 3-phosphate: step 3/5. In terms of biological role, catalyzes the interconversion of 2-phosphoglycerate and 3-phosphoglycerate. The polypeptide is 2,3-bisphosphoglycerate-dependent phosphoglycerate mutase (Neisseria meningitidis serogroup B (strain ATCC BAA-335 / MC58)).